A 345-amino-acid polypeptide reads, in one-letter code: 1-aminocyclopropane-1-carboxylate oxidase homolog 7 (345 aa).

Lysine 16 is covalently cross-linked (Glycyl lysine isopeptide (Lys-Gly) (interchain with G-Cter in ubiquitin)). In terms of domain architecture, Fe2OG dioxygenase spans 194–293; the sequence is KGLHMICHYY…RISIACFFSS (100 aa). 3 residues coordinate Fe cation: histidine 218, aspartate 220, and histidine 274. Arginine 284 lines the 2-oxoglutarate pocket.

It belongs to the iron/ascorbate-dependent oxidoreductase family. The cofactor is Fe(2+).

The polypeptide is 1-aminocyclopropane-1-carboxylate oxidase homolog 7 (Arabidopsis thaliana (Mouse-ear cress)).